Here is a 914-residue protein sequence, read N- to C-terminus: High affinity cAMP-specific and IBMX-insensitive 3',5'-cyclic phosphodiesterase 8 (914 aa).

Disordered regions lie at residues 1–27 and 113–138; these read MGCS…PLDA and RRAT…HRKS. The span at 116–129 shows a compositional bias: low complexity; that stretch reads TGSTGTSGTSSSGG. Residues 312 to 359 form the PAS domain; it reads TQQALYTALHRLKEVVLITDDLLRIQYANRATERLLNMRLDEIISKQL. The region spanning 558 to 893 is the PDEase domain; it reads TAAIVPAKMK…SQWKKYDEQG (336 aa). Catalysis depends on His640, which acts as the Proton donor. Positions 644, 682, 683, and 799 each coordinate a divalent metal cation.

Belongs to the cyclic nucleotide phosphodiesterase family. PDE8 subfamily. A divalent metal cation is required as a cofactor. As to expression, expressed in Malpighian tubules and head.

It catalyses the reaction 3',5'-cyclic AMP + H2O = AMP + H(+). Its pathway is purine metabolism; 3',5'-cyclic AMP degradation; AMP from 3',5'-cyclic AMP: step 1/1. Hydrolyzes the second messenger cAMP, which is a key regulator of many important physiological processes. Involved in the positive regulation of MAP kinase signaling and in inhibiting oxidative stress-induced cell death. This chain is High affinity cAMP-specific and IBMX-insensitive 3',5'-cyclic phosphodiesterase 8, found in Drosophila melanogaster (Fruit fly).